Consider the following 157-residue polypeptide: MLARLVLGTSGRAALGSVEPALGGLKSIWRCSQAFCSTPKGVTYRELKSLLNSKDIMLIDVRNTLEILEQGKIPGSINIPLDEVGEALQMNPVDFKEKYCQVKPSKSDRLVFSCLAGVRSKKAMDTAISLGFNSAQHYAGGWKEWVTYEISEEKQES.

Residues 52-154 (NSKDIMLIDV…WVTYEISEEK (103 aa)) form the Rhodanese domain. An N6-succinyllysine modification is found at lysine 96. Cysteine 114 (cysteine persulfide intermediate) is an active-site residue.

This Mus musculus (Mouse) protein is Thiosulfate sulfurtransferase/rhodanese-like domain-containing protein 3 (Tstd3).